The primary structure comprises 165 residues: Small ribosomal subunit protein uS3m (165 aa).

A mitochondrion-targeting transit peptide spans 1-30 (MNFLKKLLPQVATEVQQLSRSGFHTSSVCC).

It belongs to the universal ribosomal protein uS3 family. As to quaternary structure, component of the mitochondrial ribosome small subunit (28S) which comprises a 12S rRNA and about 30 distinct proteins.

It localises to the mitochondrion. The sequence is that of Small ribosomal subunit protein uS3m (mRpS24) from Drosophila melanogaster (Fruit fly).